A 288-amino-acid polypeptide reads, in one-letter code: Geranylgeranyl diphosphate synthase (288 aa).

Isopentenyl diphosphate contacts are provided by Arg43 and His73. Mg(2+) is bound by residues Asp80 and Asp86. Residue Arg91 participates in (2E,6E)-farnesyl diphosphate binding. Arg92 lines the isopentenyl diphosphate pocket. (2E,6E)-farnesyl diphosphate contacts are provided by Lys170, Thr171, and Gln205.

This sequence belongs to the FPP/GGPP synthase family. Mg(2+) serves as cofactor.

It carries out the reaction isopentenyl diphosphate + (2E,6E)-farnesyl diphosphate = (2E,6E,10E)-geranylgeranyl diphosphate + diphosphate. It participates in isoprenoid biosynthesis; geranylgeranyl diphosphate biosynthesis; geranylgeranyl diphosphate from farnesyl diphosphate and isopentenyl diphosphate: step 1/1. Its function is as follows. Catalyzes the condensation of farnesyl diphosphate (FPP) and isopentenyl diphosphate (IPP) to yield geranylgeranyl diphosphate (GGPP) needed for biosynthesis of carotenoids and diterpenes. This is Geranylgeranyl diphosphate synthase (crtE) from Cereibacter sphaeroides (strain ATCC 17023 / DSM 158 / JCM 6121 / CCUG 31486 / LMG 2827 / NBRC 12203 / NCIMB 8253 / ATH 2.4.1.) (Rhodobacter sphaeroides).